Consider the following 47-residue polypeptide: Defensin NsD7 (47 aa).

Cystine bridges form between Cys-3–Cys-47, Cys-14–Cys-34, Cys-20–Cys-41, and Cys-24–Cys-43. The a 1,2-diacyl-sn-glycero-3-phosphate site is built by Lys-4, His-33, Lys-36, and Arg-39.

The protein belongs to the DEFL family. As to quaternary structure, in the presence of phosphatidic acid (PA), forms right-handed double helices which tend to bundle into fibrils. Each helix is a repetition of dimers containing 2 bound molecules of PA per dimer. Dimers are arranged orthogonally in a tip-to-tip configuration with 1 molecule of PA located at the dimer contact interface. Association of 2 helices to form a double helix depends on intercalating isoleucine residues Ile-15 and Ile-37. Bundling of double helices into fibrils depends on Arg-26.

It localises to the vacuole. In terms of biological role, plant defense peptide. Disrupts membranes containing phosphatidic acid (PA) via a PA-dependent oligomerization process. The polypeptide is Defensin NsD7 (Nicotiana suaveolens (Australian tobacco)).